Consider the following 1205-residue polypeptide: A disintegrin and metalloproteinase with thrombospondin motifs 3 (1205 aa).

The first 20 residues, 1 to 20, serve as a signal peptide directing secretion; it reads MVLLSLWLIAAALVEVRTSA. The propeptide occupies 21–249; that stretch reads DGQAGNEEMV…QLNETMRRRR (229 aa). Asn-83, Asn-119, Asn-242, and Asn-345 each carry an N-linked (GlcNAc...) asparagine glycan. Residues 256–460 enclose the Peptidase M12B domain; that stretch reads YNIEVLLGVD…HSYDCLLDDP (205 aa). 3 disulfides stabilise this stretch: Cys-333-Cys-382, Cys-376-Cys-455, and Cys-415-Cys-441. Position 398 (His-398) interacts with Zn(2+). Residue Glu-399 is part of the active site. 2 residues coordinate Zn(2+): His-402 and His-408. The 81-residue stretch at 470 to 550 folds into the Disintegrin domain; the sequence is ELPGINYSMD…MWKNANQQKQ (81 aa). Asn-475 carries an N-linked (GlcNAc...) asparagine glycan. Intrachain disulfides connect Cys-482-Cys-507, Cys-493-Cys-516, Cys-502-Cys-535, Cys-529-Cys-540, Cys-563-Cys-600, Cys-567-Cys-605, and Cys-578-Cys-590. Residues 551 to 606 form the TSP type-1 1 domain; the sequence is DGNWGSWTKFGSCSRTCGTGVRFRTRQCNNPMPINGGQDCPGVNFEYQLCNTEECQ. Residues 713–844 are spacer; the sequence is RTVKGTFTRT…NSNNVIQEEL (132 aa). Asn-814 carries an N-linked (GlcNAc...) asparagine glycan. 3 consecutive TSP type-1 domains span residues 845-905, 906-965, and 966-1014; these read DTFE…QECT, HPLW…NRVP, and CPAQ…QLPP. The N-linked (GlcNAc...) asparagine glycan is linked to Asn-942. 3 disulfides stabilise this stretch: Cys-978-Cys-1010, Cys-982-Cys-1015, and Cys-993-Cys-999. In terms of domain architecture, PLAC spans 1015–1054; the sequence is CNDEPCLGDKSIFCQMEVLARYCSIPGYNKLCCESCSKRS. Residues 1174 to 1205 form a disordered region; that stretch reads DSIGASSQARTSKKDGKIIDNRRPTRSSTLER. Residues 1185-1205 are compositionally biased toward basic and acidic residues; the sequence is SKKDGKIIDNRRPTRSSTLER.

It depends on Zn(2+) as a cofactor. The precursor is cleaved by a furin endopeptidase. In terms of processing, glycosylated. Can be O-fucosylated by POFUT2 on a serine or a threonine residue found within the consensus sequence C1-X(2)-(S/T)-C2-G of the TSP type-1 repeat domains where C1 and C2 are the first and second cysteine residue of the repeat, respectively. Fucosylated repeats can then be further glycosylated by the addition of a beta-1,3-glucose residue by the glucosyltransferase, B3GALTL. Fucosylation mediates the efficient secretion of ADAMTS family members. Can also be C-glycosylated with one or two mannose molecules on tryptophan residues within the consensus sequence W-X-X-W of the TPRs, and N-glycosylated. These other glycosylations can also facilitate secretion. Found in cartilage and skin.

Its subcellular location is the secreted. It localises to the extracellular space. It is found in the extracellular matrix. Functionally, cleaves the propeptides of type II collagen prior to fibril assembly. Does not act on types I and III collagens. The sequence is that of A disintegrin and metalloproteinase with thrombospondin motifs 3 (ADAMTS3) from Homo sapiens (Human).